A 343-amino-acid polypeptide reads, in one-letter code: Protein RecA (343 aa).

An ATP-binding site is contributed by 66-73 (GPESSGKT).

The protein belongs to the RecA family.

Its subcellular location is the cytoplasm. Functionally, can catalyze the hydrolysis of ATP in the presence of single-stranded DNA, the ATP-dependent uptake of single-stranded DNA by duplex DNA, and the ATP-dependent hybridization of homologous single-stranded DNAs. It interacts with LexA causing its activation and leading to its autocatalytic cleavage. The protein is Protein RecA of Rickettsia massiliae (strain Mtu5).